We begin with the raw amino-acid sequence, 1425 residues long: MKNKGAKQKLKRKGAASAFGCDLTEYLESSGQDVPYVLKSCAEFIETHGIVDGIYRLSGITSNIQRLRQEFGSDQCPDLTREVYLQDIHCVGSLCKLYFRELPNPLLTYELYEKFTEAVSHRPEEGQLARIQNVILELPPPHYRTLEYLIRHLAHIASFSSKTNMHARNLALVWAPNLLRSKKIEATICNGDAAFLAVRVQQVVIEFILNHADQIFNGGAPGALQQDESRTITKSLTLPALSLPMKLVSLEEAQARSLATNHPARKERRENSLPEIVPPPFHTVLELPDNKRKLSSKSKKWKSIFNLGRSGSDSKSKLSRNGSVFVRGQRLSVEKATIRPAKSMDSLCSVPVEGKENKGNFSRTVTTGGFFIPATKMHASSTGSSCDLSKEGEWGQEGMPAGAEGGCEVGGQIRPLPEQLKVFRPIGDPESEQSAPKLLGMFYTSSDSPGKSVFTSSLFQMEPSPRHQRKALNISEPFAVSVPLRVSAVISTNSTPCRTPPKELQSLSSLEEFSFQGSESGGWPEEEKPLGAESFPGSVTKKAATEDTKPEPEVPGRAECSQSPPLDPGTQVEKKTLHVSLGSQVSKEAEKRPKAEKVMEESQGASQPKPSTPQESLGAGTEPLILHEMDEEDLAQALIWPEIQQELKIIESEEEFSSLPPAAQKTSPIPESSPAPFPFPEAPGSLPSSSAPREVWTRDAANQSIQEAAILTDREKLEPVCSLLESESQQELSPDPASLAPLEMLLFEKVSSPARIEIGGPRNLSPPLTPAPPPPTPLEEEPEVLLSKEGPDREDAARDSRTDVYTEQPTPKESPGIPTPCQREEAIASPNEKQNARHAVPENKGPGLPSPTKEVDIIPQEEGGAPHSAQEPSDCDEDDTVTDPAQHGLEMVEPWEEPQWVTSPLHSPTLKEVQESQTQGSQGHRLERRLCHRPSLRQSHSLDSKTTGNSHWTLEAPFSSSCANLETERNYEPLQPPAARTKIAGLEEKALKAFREFSGLKGLEVLPSQKGPSGIQPKPVETNFMGLAEGKEQEPQLELSNRQMKHSDVPGPDSSKESSPRAQDSTLPGEHPLQLQLKNTECGPSKGKHRPSSLNLDSATPIADLFRLENGAPFSSPGIELSELGDTKVTWMSSSHCKAAPWNSQDTQDLDIVAHTLTGRRNSAPVSVSAVRTSFMVKMCQAKAVPVIPPKIQYTQIPQPLPSQSTGEGGAQPLERSQEEPGSTPEIPQKSTKDDSPSSLGSPEEEQPKQETGASASRRQASITSCMYEGSSCSPEPSASTLASTQDAVVQCRKRTSETEPSGDNLLSSKLERASGGPKAFHRSRPGRPQSLILFPIMDHLPSSPTVIDSKVLLSPIRSPTQTVSPGLLCGELAENTWITPEGVTLRNKMTIPKNGQRLETSTSCFYQPQRRSVILDGRSGRQIE.

A Rho-GAP domain is found at 21-216 (CDLTEYLESS…FILNHADQIF (196 aa)). Residues 258-277 (LATNHPARKERRENSLPEIV) form a disordered region. Residue Ser272 is modified to Phosphoserine. Residue Thr283 is modified to Phosphothreonine. Ser343, Ser346, Ser384, and Ser464 each carry phosphoserine. The segment covering 511 to 522 (EEFSFQGSESGG) has biased composition (low complexity). Disordered regions lie at residues 511–621 (EEFS…GAGT), 652–700 (SEEE…TRDA), and 756–951 (IEIG…GNSH). Basic and acidic residues-rich tracts occupy residues 543–556 (AATE…EVPG) and 587–600 (KEAE…KVME). Positions 603–615 (QGASQPKPSTPQE) are enriched in polar residues. Thr666 carries the phosphothreonine modification. The segment covering 671 to 681 (ESSPAPFPFPE) has biased composition (pro residues). Residues Ser685, Ser690, and Ser765 each carry the phosphoserine modification. Over residues 767-777 (PLTPAPPPPTP) the composition is skewed to pro residues. Thr769 carries the phosphothreonine modification. At Thr776 the chain carries Phosphothreonine; by GSK3. Over residues 789–804 (EGPDREDAARDSRTDV) the composition is skewed to basic and acidic residues. A compositionally biased stretch (polar residues) spans 936 to 951 (LRQSHSLDSKTTGNSH). Phosphoserine is present on residues Ser961, Ser1092, Ser1093, and Ser1163. The disordered stretch occupies residues 1031 to 1095 (KEQEPQLELS…KGKHRPSSLN (65 aa)). 3 stretches are compositionally biased toward polar residues: residues 1196–1206 (QIPQPLPSQST), 1250–1260 (QETGASASRRQ), and 1299–1308 (TEPSGDNLLS). 2 disordered regions span residues 1196–1260 (QIPQ…SRRQ) and 1291–1327 (QCRK…SRPG).

Interacts with ITSN1, which inhibits GAP activity. Interacts with PARVA. Interacts with GTP-loaded RHOU. In terms of processing, phosphorylated on Thr-776 by GSK3; which reduces GAP activity. Expressed at highest levels in heart and lung.

The protein resides in the cell projection. Its subcellular location is the lamellipodium. It is found in the cell junction. The protein localises to the focal adhesion. Functionally, functions as a GTPase-activating protein (GAP) for RAC1 and CDC42. Required for cell spreading, polarized lamellipodia formation and cell migration. The polypeptide is Rho GTPase-activating protein 31 (Arhgap31) (Mus musculus (Mouse)).